Consider the following 466-residue polypeptide: Ras GTPase-activating protein-binding protein 1 (466 aa).

An NTF2 domain is found at 11–133 (VGREFVRQYY…FYVHNDIFRY (123 aa)). Glycyl lysine isopeptide (Lys-Gly) (interchain with G-Cter in ubiquitin) cross-links involve residues lysine 36, lysine 50, lysine 59, lysine 64, lysine 76, and lysine 123. The acidic disordered region stretch occupies residues 142–225 (VTEPQEESEE…EPVLEETAPE (84 aa)). Threonine 143 carries the phosphothreonine modification. Disordered regions lie at residues 144-172 (EPQE…DSGT) and 184-243 (EEHL…QTVQ). Composition is skewed to acidic residues over residues 145–157 (PQEE…EEPE) and 185–206 (EHLE…EQEP). Position 149 is a phosphoserine (serine 149). Phosphoserine is present on residues serine 231, serine 232, serine 250, and serine 253. The tract at residues 255–329 (TSKNLPPSGA…REAGEQGDIE (75 aa)) is disordered. Composition is skewed to basic and acidic residues over residues 297 to 307 (PQRDQRVREQR) and 318 to 329 (PIREAGEQGDIE). The RRM domain occupies 340–415 (HQLFIGNLPH…VRLNVEEKKT (76 aa)). Residues lysine 353 and lysine 357 each participate in a glycyl lysine isopeptide (Lys-Gly) (interchain with G-Cter in ubiquitin) cross-link. Residue serine 373 is modified to Phosphoserine. A Glycyl lysine isopeptide (Lys-Gly) (interchain with G-Cter in ubiquitin) cross-link involves residue lysine 376. Lysine 376 is modified (N6-acetyllysine; alternate). A Glycyl lysine isopeptide (Lys-Gly) (interchain with G-Cter in SUMO2); alternate cross-link involves residue lysine 376. Residue lysine 393 forms a Glycyl lysine isopeptide (Lys-Gly) (interchain with G-Cter in ubiquitin); alternate linkage. Positions 410–466 (VEEKKTRAAREGDRRDNRLRGPGGPRGGLGGGMRGPPRGGMVQKPGFGVGRGLAPRQ) are RG-rich region. Positions 413-428 (KKTRAAREGDRRDNRL) are enriched in basic and acidic residues. A disordered region spans residues 413-466 (KKTRAAREGDRRDNRLRGPGGPRGGLGGGMRGPPRGGMVQKPGFGVGRGLAPRQ). At arginine 429 the chain carries Asymmetric dimethylarginine. A compositionally biased stretch (gly residues) spans 430-447 (GPGGPRGGLGGGMRGPPR). Residue arginine 435 is modified to Asymmetric dimethylarginine; alternate. Residue arginine 435 is modified to Dimethylated arginine; alternate. Arginine 435 is subject to Omega-N-methylarginine; alternate. An Omega-N-methylarginine modification is found at arginine 447. Arginine 460 is modified (dimethylated arginine; alternate). Arginine 460 is modified (omega-N-methylarginine; alternate). The residue at position 465 (arginine 465) is an Omega-N-methylarginine.

As to quaternary structure, homodimer and oligomer. Component of a TAU mRNP complex, at least composed of IGF2BP1, ELAVL4 and G3BP1. Binds to the SH3 domain of Ras GTPase-activating protein (RASA1) in proliferating cells. No interaction in quiescent cells. Interacts (via NTF2 domain) with USP10; inhibiting stress granule formation by lowering G3BP1 valence. Interacts (via NTF2 domain) with CAPRIN1; promoting stress granule formation by lowering the saturation-concentration of G3BP1. Interacts (via NTF2 domain) with UBAP2L; promoting stress granule formation. Associates (via RG-rich region) with 40S ribosome subunits. Interacts with RPTOR and SPAG5; this complex is increased by oxidative stress. Interacts with ATXN2L. Interacts with STYXL1. Interacts with CGAS (via N-terminus); this interaction promotes the DNA-binding and activation of CGAS. Interacts (via C-terminus) with RIGI. Interacts with PABPC1. Interacts with QKI (isoforms QKI6 and QKI7); directing N(7)-methylguanine-containing mRNAs to stress granules. (Microbial infection) Interacts with Semliki forest virus non-structural protein 3 (via C-terminus); this interaction inhibits the formation of stress granules on viral mRNAs and the nsp3-G3BP1 complexes bind viral RNAs and probably orchestrate the assembly of viral replication complexes. In terms of assembly, (Microbial infection) Interacts with Chikungunya virus non-structural protein 3 (via C-terminus); this interaction inhibits the formation of stress granules on viral mRNAs and the nsp3-G3BP1 complexes bind viral RNAs and probably orchestrate the assembly of viral replication complexes. As to quaternary structure, (Microbial infection) Interacts with Sindbis virus non-structural protein 3 (via C-terminus); this interaction inhibits the formation of stress granules on viral mRNAs and the nsp3-G3BP1 complexes bind viral RNAs and probably orchestrate the assembly of viral replication complexes. (Microbial infection) Interacts with Zika virus capsid protein C; this interaction is probably linked to the inhibition of stress granules formation by the virus. In terms of assembly, (Microbial infection) Interacts with reovirus type 2 protein sigma-NS; this interaction induces the relocalization of G3BP1 to the outer periphery of sigma-NS/mu-Ns viral factories and is probably involved in the suppression of the integrated stress response by the virus. As to quaternary structure, (Microbial infection) Interacts with SARS-CoV-2 N protein; the interaction is enhanced by host HDAC6 which deacetylates the viral N protein and promotes N protein association with G3BP1, disrupting stress granule formation and facilitating viral replication. Interacts with HDAC6; the interaction increases during SARS-CoV-2 infection. Mg(2+) serves as cofactor. Phosphorylation of the acidic disordered region regulates stress granule assembly. RASA1-dependent phosphorylation of Ser-149 induces a conformational change that prevents self-association. Dephosphorylation after HRAS activation is required for stress granule assembly. Ser-149 phosphorylation induces partial nuclear localization. In terms of processing, ubiquitinated by TRIM21 via 'Lys-63'-linked polyubiquitination in the NTF2 domain in response to heat shock, leading to stress granule disassembly: ubiquitination promotes interaction with the FAF2 adapter, followed by interaction with VCP, which extracts G3BP1 from stress granules, leading to stress granule disassembly. In case of prolonged stress, ubiquitination by TRIM21 leads to autophagy-dependent degradation of G3BP1 via recruitment of ubiquitinated G3BP1 by SQSTM1 and/or CALCOCO2 to autophagosomes. Post-translationally, (Microbial infection) Cleaved by human enterovirus 71; this cleavage induces the disassembly of cytoplasmic stress granules. Cleaved by Foot-and-mouth disease virus; this cleavage suppresses the formation of cytoplasmic stress granules. Arg-435 is dimethylated, probably to asymmetric dimethylarginine. In terms of processing, (Microbial infection) Cleaved by Encephalomyocarditis virus protease 3C; this cleavage suppresses the formation of cytoplasmic stress granules. Ubiquitous.

The protein resides in the cytoplasm. It is found in the cytosol. Its subcellular location is the perikaryon. The protein localises to the stress granule. It localises to the nucleus. The catalysed reaction is ATP + H2O = ADP + phosphate + H(+). Under physiological conditions, G3BP1 adopts a compact state that is stabilized by intramolecular interactions between the RG-rich and the acidic regions that inhibit phase separation. Upon stress, polysomes disassemble and mRNAs are released in an unfolded protein-free state. Binding of unfolded mRNA to G3BP1 outcompetes the intramolecular interactions and RNA-bound G3BP1 adopts an expanded conformation in which the RG-rich region becomes exposed to engage in protein-protein and protein-RNA interactions, allowing physical cross-linking of RNA molecules to form protein-RNA condensates, leading to liquid-liquid phase separation (LLPS). Protein involved in various processes, such as stress granule formation and innate immunity. Plays an essential role in stress granule formation. Stress granules are membraneless compartments that store mRNAs and proteins, such as stalled translation pre-initiation complexes, in response to stress. Promotes formation of stress granules phase-separated membraneless compartment by undergoing liquid-liquid phase separation (LLPS) upon unfolded RNA-binding: functions as a molecular switch that triggers RNA-dependent LLPS in response to a rise in intracellular free RNA concentrations. Also acts as an ATP- and magnesium-dependent helicase: unwinds DNA/DNA, RNA/DNA, and RNA/RNA substrates with comparable efficiency. Acts unidirectionally by moving in the 5' to 3' direction along the bound single-stranded DNA. Unwinds preferentially partial DNA and RNA duplexes having a 17 bp annealed portion and either a hanging 3' tail or hanging tails at both 5'- and 3'-ends. Plays an essential role in innate immunity by promoting CGAS and RIGI activity. Participates in the DNA-triggered cGAS/STING pathway by promoting the DNA binding and activation of CGAS. Triggers the condensation of cGAS, a process probably linked to the formation of membrane-less organelles. Also enhances RIGI-induced type I interferon production probably by helping RIGI at sensing pathogenic RNA. May also act as a phosphorylation-dependent sequence-specific endoribonuclease in vitro: Cleaves exclusively between cytosine and adenine and cleaves MYC mRNA preferentially at the 3'-UTR. The polypeptide is Ras GTPase-activating protein-binding protein 1 (Homo sapiens (Human)).